Here is a 337-residue protein sequence, read N- to C-terminus: Heat-inducible transcription repressor HrcA (337 aa).

The protein belongs to the HrcA family.

In terms of biological role, negative regulator of class I heat shock genes (grpE-dnaK-dnaJ and groELS operons). Prevents heat-shock induction of these operons. This is Heat-inducible transcription repressor HrcA from Polaromonas naphthalenivorans (strain CJ2).